The primary structure comprises 65 residues: Small ribosomal subunit protein eS31 (65 aa).

Residues C36, C39, C55, and C58 each coordinate Zn(2+). The C4-type zinc-finger motif lies at 36 to 58 (CPKCGSVMAFHKEPVPRWHCGKC).

Belongs to the eukaryotic ribosomal protein eS31 family. Part of the 30S ribosomal subunit. Zn(2+) serves as cofactor.

This chain is Small ribosomal subunit protein eS31, found in Pyrobaculum aerophilum (strain ATCC 51768 / DSM 7523 / JCM 9630 / CIP 104966 / NBRC 100827 / IM2).